A 115-amino-acid chain; its full sequence is uncharacterized protein (115 aa).

This is an uncharacterized protein from Acidianus filamentous virus 1 (isolate United States/Yellowstone) (AFV-1).